A 200-amino-acid chain; its full sequence is GTP cyclohydrolase-2 (200 aa).

Residue 49–53 (RVHSE) participates in GTP binding. Residues Cys54, Cys65, and Cys67 each coordinate Zn(2+). GTP contacts are provided by residues Gln70, 92-94 (EGR), and Thr114. The active-site Proton acceptor is the Asp126. The active-site Nucleophile is the Arg128. Thr149 and Lys154 together coordinate GTP.

The protein belongs to the GTP cyclohydrolase II family. Homodimer. It depends on Zn(2+) as a cofactor.

It catalyses the reaction GTP + 4 H2O = 2,5-diamino-6-hydroxy-4-(5-phosphoribosylamino)-pyrimidine + formate + 2 phosphate + 3 H(+). It participates in cofactor biosynthesis; riboflavin biosynthesis; 5-amino-6-(D-ribitylamino)uracil from GTP: step 1/4. Its function is as follows. Catalyzes the conversion of GTP to 2,5-diamino-6-ribosylamino-4(3H)-pyrimidinone 5'-phosphate (DARP), formate and pyrophosphate. This is GTP cyclohydrolase-2 from Klebsiella pneumoniae (strain 342).